The chain runs to 681 residues: Type VI secretion system spike protein VgrG2 (681 aa).

Residues 284–309 form a disordered region; the sequence is AVAGSGKSNSSALQPGQTFSLTEHPN. The segment covering 289–309 has biased composition (polar residues); that stretch reads GKSNSSALQPGQTFSLTEHPN.

It belongs to the VgrG protein family.

Part of the type VI secretion system specialized secretion system, which delivers several virulence factors in both prokaryotic and eukaryotic cells during infection. Plays an essential role in bacterial mobility and biofilm formation. The chain is Type VI secretion system spike protein VgrG2 from Aeromonas hydrophila.